A 552-amino-acid polypeptide reads, in one-letter code: C-type lectin receptor-like tyrosine-protein kinase At1g52310 (552 aa).

Residues 1 to 27 (MELKWVSCRKQSLFLISCLALLCLASL) form the signal peptide. Topologically, residues 28-201 (DTISCESTQN…DIKCRNCHKY (174 aa)) are extracellular. N-linked (GlcNAc...) asparagine glycosylation is found at N37, N59, N69, N106, N118, N137, N154, N169, and N180. In terms of domain architecture, C-type lectin spans 59-188 (NQTKCYAYFK…CNASHAFVCA (130 aa)). 2 disulfides stabilise this stretch: C80–C187 and C164–C179. The chain crosses the membrane as a helical span at residues 202–222 (LVILAVVSGLILFTTFAIILW). The Cytoplasmic portion of the chain corresponds to 223 to 552 (LLVYKRSKKR…QQLVQPLEVK (330 aa)). A Protein kinase domain is found at 268 to 546 (SEANRLAGDA…HVVHQLQQLV (279 aa)). ATP is bound by residues 274–282 (AGDAKTGGT) and K296. The active-site Proton acceptor is the D394.

Belongs to the protein kinase superfamily. Tyr protein kinase family.

The protein resides in the cell membrane. It carries out the reaction L-tyrosyl-[protein] + ATP = O-phospho-L-tyrosyl-[protein] + ADP + H(+). The sequence is that of C-type lectin receptor-like tyrosine-protein kinase At1g52310 from Arabidopsis thaliana (Mouse-ear cress).